A 127-amino-acid chain; its full sequence is Fluoride-specific ion channel FluC 2 (127 aa).

A run of 4 helical transmembrane segments spans residues 4–24 (IIAITGFAMLGGGLREGLSLL), 31–51 (FWITCLINIVGAFVLSLITNL), 62–82 (IVIGMSVGFVGSFTTFSTFTF), and 94–114 (VLALSYVAASLGLGLLAGLAG). Na(+)-binding residues include Gly-72 and Thr-75.

The protein belongs to the fluoride channel Fluc/FEX (TC 1.A.43) family.

The protein resides in the cell membrane. It carries out the reaction fluoride(in) = fluoride(out). With respect to regulation, na(+) is not transported, but it plays an essential structural role and its presence is essential for fluoride channel function. Fluoride-specific ion channel. Important for reducing fluoride concentration in the cell, thus reducing its toxicity. The polypeptide is Fluoride-specific ion channel FluC 2 (Lactiplantibacillus plantarum (strain ATCC BAA-793 / NCIMB 8826 / WCFS1) (Lactobacillus plantarum)).